Here is a 120-residue protein sequence, read N- to C-terminus: ATP-dependent Clp protease adapter protein ClpS (120 aa).

The tract at residues 1–27 (MHAPSEIRLTFNQDRPQSNEDDGSGLA) is disordered.

Belongs to the ClpS family. As to quaternary structure, binds to the N-terminal domain of the chaperone ClpA.

Its function is as follows. Involved in the modulation of the specificity of the ClpAP-mediated ATP-dependent protein degradation. This is ATP-dependent Clp protease adapter protein ClpS from Pseudomonas putida (strain GB-1).